A 280-amino-acid chain; its full sequence is Alpha-methyl-mannoside-specific lectin (280 aa).

The signal sequence occupies residues 1-26 (MAISKKILPLLSIATIFLLLLNKAHS). The a carbohydrate site is built by D114 and G134. Mn(2+) contacts are provided by E156 and D158. Ca(2+)-binding residues include D158 and F160. S165 and N166 together coordinate a carbohydrate. Ca(2+) contacts are provided by N166 and D169. Mn(2+) contacts are provided by D169 and H174. Residues G248 and Q250 each contribute to the a carbohydrate site.

It belongs to the leguminous lectin family. As to quaternary structure, homodimer. Glycosylated.

Functionally, alpha-methyl-D-mannoside-specific lectin. Has hemagglutinating activity towards rabbit erythrocytes. Binds to cytokinins and significantly inhibits physiological effects of cytokinin activity such as cotyledon expansion and delayed leaf senescence. In Arachis hypogaea (Peanut), this protein is Alpha-methyl-mannoside-specific lectin.